A 251-amino-acid chain; its full sequence is Cholesterol 25-hydroxylase-like protein (251 aa).

3 helical membrane passes run 22–42 (FFPV…FVLL), 69–89 (WSCL…LSVL), and 108–128 (VVWD…VWHL). In terms of domain architecture, Fatty acid hydroxylase spans 113–247 (AACLLLFDFQ…FTHWDKLFGT (135 aa)). The short motif at 126-130 (WHLLH) is the Histidine box-1 element. The Histidine box-2 signature appears at 141-145 (HKVHH). Positions 222–228 (HHDVHHQ) match the Histidine box-3 motif.

The protein belongs to the sterol desaturase family. It depends on Fe cation as a cofactor.

It is found in the endoplasmic reticulum membrane. It catalyses the reaction cholesterol + AH2 + O2 = 25-hydroxycholesterol + A + H2O. The enzyme catalyses cholesterol + NADPH + O2 + H(+) = 25-hydroxycholesterol + NADP(+) + H2O. Its function is as follows. Catalyzes the formation of 25-hydroxycholesterol from cholesterol, leading to repress cholesterol biosynthetic enzymes. Plays a key role in cell positioning and movement in lymphoid tissues: 25-hydroxycholesterol is an intermediate in biosynthesis of 7-alpha,25-dihydroxycholesterol (7-alpha,25-OHC), an oxysterol that acts as a ligand for the G protein-coupled receptor GPR183/EBI2, a chemotactic receptor for a number of lymphoid cells. May play an important role in regulating lipid metabolism by synthesizing a corepressor that blocks sterol regulatory element binding protein (SREBP) processing. In testis, production of 25-hydroxycholesterol by macrophages may play a role in Leydig cell differentiation. This chain is Cholesterol 25-hydroxylase-like protein (ch25h), found in Danio rerio (Zebrafish).